Consider the following 325-residue polypeptide: Probable cell division protein WhiA (325 aa).

The segment at residues serine 280–lysine 313 is a DNA-binding region (H-T-H motif).

It belongs to the WhiA family.

Functionally, involved in cell division and chromosome segregation. The sequence is that of Probable cell division protein WhiA from Caldicellulosiruptor saccharolyticus (strain ATCC 43494 / DSM 8903 / Tp8T 6331).